We begin with the raw amino-acid sequence, 258 residues long: Regulatory protein RecX (258 aa).

Belongs to the RecX family.

The protein localises to the cytoplasm. Modulates RecA activity. The polypeptide is Regulatory protein RecX (Streptococcus pneumoniae (strain P1031)).